Consider the following 549-residue polypeptide: Cytoplasmic trehalase (549 aa).

Substrate contacts are provided by residues Arg168, 175–176 (WD), Asn212, 221–223 (RSQ), 292–294 (RDE), and Gly324. Catalysis depends on proton donor/acceptor residues Asp326 and Glu509. Residue Glu525 participates in substrate binding.

It belongs to the glycosyl hydrolase 37 family. As to quaternary structure, monomer.

The protein resides in the cytoplasm. It catalyses the reaction alpha,alpha-trehalose + H2O = alpha-D-glucose + beta-D-glucose. The protein operates within glycan degradation; trehalose degradation; D-glucose from alpha,alpha-trehalose: step 1/1. In terms of biological role, hydrolyzes trehalose to glucose. Could be involved, in cells returning to low osmolarity conditions, in the utilization of the accumulated cytoplasmic trehalose, which was synthesized in response to high osmolarity. The polypeptide is Cytoplasmic trehalase (Escherichia coli (strain 55989 / EAEC)).